Here is a 1088-residue protein sequence, read N- to C-terminus: RNA-directed RNA polymerase (1088 aa).

The region spanning 501–687 is the RdRp catalytic domain; the sequence is LSYGDVTRFL…AKRYIAGGKI (187 aa).

The protein belongs to the reoviridae RNA-directed RNA polymerase family. Interacts with VP3 (Potential). Interacts with VP2; this interaction activates VP1. Interacts with NSP5; this interaction is probably necessary for the formation of functional virus factories. Interacts with NSP2; this interaction is weak. Requires Mg(2+) as cofactor.

The protein resides in the virion. It carries out the reaction RNA(n) + a ribonucleoside 5'-triphosphate = RNA(n+1) + diphosphate. In terms of biological role, RNA-directed RNA polymerase that is involved in both transcription and genome replication. Together with VP3 capping enzyme, forms an enzyme complex positioned near the channels situated at each of the five-fold vertices of the core. Following infection, the outermost layer of the virus is lost, leaving a double-layered particle (DLP) made up of the core and VP6 shell. VP1 then catalyzes the transcription of fully conservative plus-strand genomic RNAs that are extruded through the DLP's channels into the cytoplasm where they function as mRNAs for translation of viral proteins. One copy of each of the viral (+)RNAs is also recruited during core assembly, together with newly synthesized polymerase complexes and VP2. The polymerase of these novo-formed particles catalyzes the synthesis of complementary minus-strands leading to dsRNA formation. To do so, the polymerase specifically recognizes and binds 4 bases 5'-UGUG-3' in the conserved 3'-sequence of plus-strand RNA templates. VP2 presumably activates the autoinhibited VP1-RNA complex to coordinate packaging and genome replication. Once dsRNA synthesis is complete, the polymerase switches to the transcriptional mode, thus providing secondary transcription. In Rotavirus A (isolate RVA/Human/United States/WI61/1983/G9P1A[8]) (RV-A), this protein is RNA-directed RNA polymerase.